The chain runs to 102 residues: Large ribosomal subunit protein bL21 (102 aa).

The protein belongs to the bacterial ribosomal protein bL21 family. Part of the 50S ribosomal subunit. Contacts protein L20.

Functionally, this protein binds to 23S rRNA in the presence of protein L20. The chain is Large ribosomal subunit protein bL21 from Staphylococcus aureus.